Consider the following 217-residue polypeptide: Monomethylamine corrinoid protein 2 (217 aa).

The B12-binding N-terminal domain occupies 1–91 (MTNTEIFDKL…ELEKNKKEGD (91 aa)). The region spanning 93–217 (AGLAITFVAE…AAKVALEVMK (125 aa)) is the B12-binding domain. His-106 is a binding site for methylcob(III)alamin.

It belongs to the methylamine corrinoid protein family. Can form a complex with MtmB.

It functions in the pathway one-carbon metabolism; methanogenesis from methylamine. Acts as a methyl group carrier between MtmB and MtbA. This is Monomethylamine corrinoid protein 2 (mtmC2) from Methanosarcina barkeri.